A 524-amino-acid chain; its full sequence is Citrate exporter 1 (524 aa).

A disordered region spans residues Met1–His49. Polar residues predominate over residues Pro34 to Glu45. A helical transmembrane segment spans residues Met60–Pro80. Asn90 carries N-linked (GlcNAc...) asparagine glycosylation. The next 5 helical transmembrane spans lie at Leu95–Gly115, Pro125–Lys145, Ala155–Ile175, Gly186–Phe206, and Ile215–Pro235. Asn244 carries N-linked (GlcNAc...) asparagine glycosylation. The next 6 membrane-spanning stretches (helical) occupy residues Val296–Ser316, Ile332–Tyr352, Thr395–Thr415, Leu417–Ile437, Leu459–Leu479, and Pro481–Val501.

Belongs to the major facilitator superfamily.

It is found in the cell membrane. It catalyses the reaction citrate(in) = citrate(out). In terms of biological role, transmembrane transporter that exports citrate across the cell membrane. This is Citrate exporter 1 from Aspergillus niger (strain ATCC 1015 / CBS 113.46 / FGSC A1144 / LSHB Ac4 / NCTC 3858a / NRRL 328 / USDA 3528.7).